The primary structure comprises 399 residues: Ras-related GTP-binding protein C (399 aa).

The interval 1-20 (MSLQYGAEETPLAGSYGAAD) is disordered. S2 bears the N-acetylserine mark. A phosphoserine mark is found at S2 and S15. R71, S72, G73, K74, S75, S76, T90, E94, T96, H178, K179, D181, S219, and I220 together coordinate GDP. GTP is bound at residue K74. T90 contacts GTP. T96 is a binding site for GTP. The residue at position 96 (T96) is a Phosphothreonine. D181 serves as a coordination point for GTP.

This sequence belongs to the GTR/RAG GTP-binding protein family. In terms of assembly, forms a heterodimer with RRAGA, in a sequence-independent manner, and RRAGB. Heterodimerization stabilizes proteins of the heterodimer. The GDP-bound form of RRAGC (in complex with the GTP-bound form of RRAGA or RRAGB), interacts with RPTOR, thereby promoting recruitment of mTORC1 to the lysosomes. Component of the lysosomal folliculin complex (LFC), composed of FLCN, FNIP1 (or FNIP2), RagA/RRAGA or RagB/RRAGB GDP-bound, RagC/RRAGC or RagD/RRAGD GTP-bound, and Ragulator. Interacts with NOL8. Interacts with SH3BP4; the interaction with this negative regulator is most probably direct, preferentially occurs with the inactive GDP-bound form of RRAGB, is negatively regulated by amino acids and prevents interaction with RPTOR. The Rag heterodimer interacts with SLC38A9; the probable amino acid sensor. Interacts with SESN1, SESN2 and SESN3. Interacts with PIP4P1. The Rag heterodimer interacts with the Ragulator complex. The GDP-bound form interacts with TFEB. The GDP-bound form interacts with TFE3.

It is found in the cytoplasm. It localises to the nucleus. Its subcellular location is the lysosome membrane. The enzyme catalyses GTP + H2O = GDP + phosphate + H(+). With respect to regulation, the activation of RagC/RRAGC is mediated by a GTPase activating protein (GAP). In high-amino acid conditions, activated by GTPase activating protein FLCN that stimulates RRAGC GTPase activity to turn it into its active GDP-bound form. In response to amino acid depletion, the GATOR1 complex inactivates RagC/RRAGC by securing the GTP-bound inactive form. Its function is as follows. Guanine nucleotide-binding protein that plays a crucial role in the cellular response to amino acid availability through regulation of the mTORC1 signaling cascade. Forms heterodimeric Rag complexes with RagA/RRAGA or RagB/RRAGB and cycles between an inactive GTP-bound and an active GDP-bound form: RagC/RRAGC is in its active form when GDP-bound RagC/RRAGC forms a complex with GTP-bound RagA/RRAGA (or RagB/RRAGB) and in an inactive form when GTP-bound RagC/RRAGC heterodimerizes with GDP-bound RagA/RRAGA (or RagB/RRAGB). In its GDP-bound active form, promotes the recruitment of mTORC1 to the lysosomes and its subsequent activation by the GTPase RHEB. This is a crucial step in the activation of the MTOR signaling cascade by amino acids. Also plays a central role in the non-canonical mTORC1 complex, which acts independently of RHEB and specifically mediates phosphorylation of MiT/TFE factors TFEB and TFE3: GDP-bound RagC/RRAGC mediates recruitment of MiT/TFE factors TFEB and TFE3. The chain is Ras-related GTP-binding protein C from Homo sapiens (Human).